A 62-amino-acid polypeptide reads, in one-letter code: Potassium channel toxin alpha-KTx 22.1 (62 aa).

An N-terminal signal peptide occupies residues 1 to 18 (MQKLFIVFVLFCILRLDA). 3 disulfides stabilise this stretch: C28-C46, C33-C59, and C37-C61.

Belongs to the short scorpion toxin superfamily. Potassium channel inhibitor family. Alpha-KTx 22 subfamily. In terms of tissue distribution, expressed by the venom gland.

It localises to the secreted. May block potassium channels. This Olivierus martensii (Manchurian scorpion) protein is Potassium channel toxin alpha-KTx 22.1.